A 246-amino-acid polypeptide reads, in one-letter code: uncharacterized protein (246 aa).

To M.jannaschii MJ1676.

This is an uncharacterized protein from Methanothermobacter thermautotrophicus (strain ATCC 29096 / DSM 1053 / JCM 10044 / NBRC 100330 / Delta H) (Methanobacterium thermoautotrophicum).